The sequence spans 527 residues: Peptide chain release factor 3 (527 aa).

A tr-type G domain is found at 10–278; that stretch reads DRRRTFAIIS…TFVENAPAPL (269 aa). GTP is bound by residues 19 to 26, 87 to 91, and 141 to 144; these read SHPDAGKT, DTPGH, and NKLD.

This sequence belongs to the TRAFAC class translation factor GTPase superfamily. Classic translation factor GTPase family. PrfC subfamily.

The protein localises to the cytoplasm. Its function is as follows. Increases the formation of ribosomal termination complexes and stimulates activities of RF-1 and RF-2. It binds guanine nucleotides and has strong preference for UGA stop codons. It may interact directly with the ribosome. The stimulation of RF-1 and RF-2 is significantly reduced by GTP and GDP, but not by GMP. The sequence is that of Peptide chain release factor 3 from Geobacter metallireducens (strain ATCC 53774 / DSM 7210 / GS-15).